The following is a 320-amino-acid chain: Apolipoprotein E (320 aa).

Residues 1–18 form the signal peptide; sequence MKVLWAALLVAFLAGCQG. 8 tandem repeats follow at residues 82 to 103, 104 to 125, 126 to 147, 148 to 169, 170 to 191, 192 to 213, 214 to 236, and 237 to 258. An 8 X 22 AA approximate tandem repeats region spans residues 82–258; the sequence is ALMDETMKEL…RLDEVKEQVE (177 aa). Residue M145 is modified to Methionine sulfoxide. S149 bears the Phosphoserine mark. Positions 160 to 170 are LDL and other lipoprotein receptors binding; that stretch reads HLRKLRKRLLR. 164–167 is a binding site for heparin; the sequence is LRKR. The interval 212 to 293 is lipid-binding and lipoprotein association; the sequence is AATVGSSLAG…SWFEPLVEDM (82 aa). 232–239 is a binding site for heparin; it reads GERLRARM. Residues 269–320 are homooligomerization; it reads QQMRLQAEAFQARLKSWFEPLVEDMQRQWAGLVEKVQAAVGASAAPVPSDNH. A specificity for association with VLDL region spans residues 281-293; that stretch reads RLKSWFEPLVEDM.

Belongs to the apolipoprotein A1/A4/E family. In terms of assembly, homotetramer. May interact with ABCA1; functionally associated with ABCA1 in the biogenesis of HDLs. May interact with APP/A4 amyloid-beta peptide; the interaction is extremely stable in vitro but its physiological significance is unclear. May interact with MAPT. May interact with MAP2. In the cerebrospinal fluid, interacts with secreted SORL1. Interacts with PMEL; this allows the loading of PMEL luminal fragment on ILVs to induce fibril nucleation. Post-translationally, APOE exists as multiple glycosylated and sialylated glycoforms within cells and in plasma. The extent of glycosylation and sialylation are tissue and context specific. Glycated in plasma VLDL. In terms of processing, phosphorylated by FAM20C in the extracellular medium.

The protein resides in the secreted. It is found in the extracellular space. The protein localises to the extracellular matrix. Its subcellular location is the extracellular vesicle. It localises to the endosome. The protein resides in the multivesicular body. Functionally, APOE is an apolipoprotein, a protein associating with lipid particles, that mainly functions in lipoprotein-mediated lipid transport between organs via the plasma and interstitial fluids. APOE is a core component of plasma lipoproteins and is involved in their production, conversion and clearance. Apolipoproteins are amphipathic molecules that interact both with lipids of the lipoprotein particle core and the aqueous environment of the plasma. As such, APOE associates with chylomicrons, chylomicron remnants, very low density lipoproteins (VLDL) and intermediate density lipoproteins (IDL) but shows a preferential binding to high-density lipoproteins (HDL). It also binds a wide range of cellular receptors including the LDL receptor/LDLR, the LDL receptor-related proteins LRP1, LRP2 and LRP8 and the very low-density lipoprotein receptor/VLDLR that mediate the cellular uptake of the APOE-containing lipoprotein particles. Finally, APOE also has a heparin-binding activity and binds heparan-sulfate proteoglycans on the surface of cells, a property that supports the capture and the receptor-mediated uptake of APOE-containing lipoproteins by cells. A main function of APOE is to mediate lipoprotein clearance through the uptake of chylomicrons, VLDLs, and HDLs by hepatocytes. APOE is also involved in the biosynthesis by the liver of VLDLs as well as their uptake by peripheral tissues ensuring the delivery of triglycerides and energy storage in muscle, heart and adipose tissues. By participating in the lipoprotein-mediated distribution of lipids among tissues, APOE plays a critical role in plasma and tissues lipid homeostasis. APOE is also involved in two steps of reverse cholesterol transport, the HDLs-mediated transport of cholesterol from peripheral tissues to the liver, and thereby plays an important role in cholesterol homeostasis. First, it is functionally associated with ABCA1 in the biogenesis of HDLs in tissues. Second, it is enriched in circulating HDLs and mediates their uptake by hepatocytes. APOE also plays an important role in lipid transport in the central nervous system, regulating neuron survival and sprouting. This is Apolipoprotein E (APOE) from Plecturocebus moloch (Dusky titi monkey).